Consider the following 303-residue polypeptide: MSVIFFACVVRVRDGLPLSASTDFYHTQDFLEWRRRLKSLALRLAQYPGRGSAEGCDFSIHFSSFGDVACMAICSCQCPAAMAFCFLETLWWEFTASYDTTCIGLASRPYAFLEFDSIIQKVKWHFNYVSSSQMECSLEKIQEELKLQPPAVLTLEDTDVANGVMNGHTPMHLEPAPNFRMEPVTALGILSLILNIMCAALNLIRGVHLAEHSLQVAHEEIGNILAFLVPFVACIFQCYLYLFYSPARTMKVVLMLLFICLGNMYLHGLRNLWQILFHIGVAFLSSYQILTRQLQEKQSDCGV.

Residues Met1–Pro183 lie on the Cytoplasmic side of the membrane. The Longin domain occupies Cys8–Ile119. Residues Val184 to Ile204 form a helical membrane-spanning segment. The Lumenal segment spans residues Arg205–Asn223. The chain crosses the membrane as a helical span at residues Ile224–Tyr244. The Cytoplasmic portion of the chain corresponds to Ser245–Arg248. A helical membrane pass occupies residues Thr249 to Leu269. Arg270 is a topological domain (lumenal). A helical transmembrane segment spans residues Asn271–Thr291. The Cytoplasmic segment spans residues Arg292–Val303.

Belongs to the synaptobrevin family. Ubiquitously expressed.

It is found in the endoplasmic reticulum membrane. In terms of biological role, may be involved in vesicle transport between the ER and the Golgi complex. This chain is Vesicle-trafficking protein SEC22c (SEC22C), found in Homo sapiens (Human).